Consider the following 223-residue polypeptide: Adenylate kinase (223 aa).

Gly-10–Thr-15 provides a ligand contact to ATP. The segment at Glu-30–Val-59 is NMP. AMP-binding positions include Ser-31, Arg-36, Asp-57–Val-59, Gly-84–Arg-87, and Gln-91. Residues Gly-125 to Asp-164 form an LID region. Arg-126 is an ATP binding site. Residues Arg-161 and Arg-173 each coordinate AMP. Gly-209 contacts ATP.

The protein belongs to the adenylate kinase family. As to quaternary structure, monomer.

It localises to the cytoplasm. The enzyme catalyses AMP + ATP = 2 ADP. Its pathway is purine metabolism; AMP biosynthesis via salvage pathway; AMP from ADP: step 1/1. Catalyzes the reversible transfer of the terminal phosphate group between ATP and AMP. Plays an important role in cellular energy homeostasis and in adenine nucleotide metabolism. The polypeptide is Adenylate kinase (Nitratidesulfovibrio vulgaris (strain ATCC 29579 / DSM 644 / CCUG 34227 / NCIMB 8303 / VKM B-1760 / Hildenborough) (Desulfovibrio vulgaris)).